Consider the following 322-residue polypeptide: Extracellular metalloprotease AFUA_1G07730 (322 aa).

The first 22 residues, 1–22 (MLPFNSCVYVLLIISLMSNCRA), serve as a signal peptide directing secretion. Residues Asn123 and Asn197 are each glycosylated (N-linked (GlcNAc...) asparagine). A Zn(2+)-binding site is contributed by His233. The active site involves Glu234. Zn(2+) is bound at residue His237. Cysteines 272 and 299 form a disulfide.

This sequence belongs to the peptidase M43B family.

Its subcellular location is the secreted. Secreted metalloproteinase that allows assimilation of proteinaceous substrates. Plays a pivotal role as a pathogenicity determinant during infections and contributes to the ability of the pathogen to persist within the mammalian host. The protein is Extracellular metalloprotease AFUA_1G07730 of Aspergillus fumigatus (strain ATCC MYA-4609 / CBS 101355 / FGSC A1100 / Af293) (Neosartorya fumigata).